A 261-amino-acid chain; its full sequence is Short-chain dehydrogenase/reductase AFUA_1G00990 (261 aa).

NADP(+)-binding residues include Leu19, Asp67, Asn94, Tyr169, Lys173, and Thr213. Tyr169 functions as the Proton donor in the catalytic mechanism. The Lowers pKa of active site Tyr role is filled by Lys173.

The protein belongs to the short-chain dehydrogenases/reductases (SDR) family.

Short-chain dehydrogenase/reductase; part of the gene cluster that mediates the biosynthesis of fumigermin that inhibits germination of spores of the inducing S.rapamycinicus, and thus helps the fungus to defend resources in the shared habitat against a bacterial competitor. The partially reducing polyketide synthase fngA alone is sufficient for the production of fumigermin. FgnA catalyzes the condensation of 3 malonyl-CoA units to an acetyl-CoA starter, and 3 methylations to yield fumigermin. It is remarkable that the five cluster genes including fgnA are conserved in distantly related fungi, supporting the assumption of a fumigermin cluster; it is thus possible that originally all five genes were functional, but that the genes encoding tailoring enzymes became inactive from mutations, similar to the case of the fgnA gene in strains A1163 and Af293. This is Short-chain dehydrogenase/reductase AFUA_1G00990 from Aspergillus fumigatus (strain ATCC MYA-4609 / CBS 101355 / FGSC A1100 / Af293) (Neosartorya fumigata).